The following is a 278-amino-acid chain: Complement C1q tumor necrosis factor-related protein 6 (278 aa).

An N-terminal signal peptide occupies residues 1–46 (MQWLRVRESPGEATGHRVTMGTAALGPVWAALLLFLLMCEIPMVEL). N91 carries N-linked (GlcNAc...) asparagine glycosylation. One can recognise a Collagen-like domain in the interval 97-138 (GDKGDPGPMGLPGYMGREGPQGEPGPQGSKGDKGEMGSPGAP). Positions 99–135 (KGDPGPMGLPGYMGREGPQGEPGPQGSKGDKGEMGSP) are disordered. One can recognise a C1q domain in the interval 139–259 (CQKRFFAFSV…KRQRENAIYS (121 aa)).

It localises to the secreted. The protein is Complement C1q tumor necrosis factor-related protein 6 (C1QTNF6) of Homo sapiens (Human).